Here is a 127-residue protein sequence, read N- to C-terminus: Large ribosomal subunit protein bL17 (127 aa).

It belongs to the bacterial ribosomal protein bL17 family. Part of the 50S ribosomal subunit. Contacts protein L32.

The sequence is that of Large ribosomal subunit protein bL17 from Ligilactobacillus salivarius (strain UCC118) (Lactobacillus salivarius).